A 206-amino-acid polypeptide reads, in one-letter code: Recombination protein RecR (206 aa).

The C4-type zinc finger occupies 58-73 (CNICGYITEKNICNFC). The 98-residue stretch at 81–178 (STIMIVADNR…KITKLAYGIP (98 aa)) folds into the Toprim domain.

Belongs to the RecR family.

In terms of biological role, may play a role in DNA repair. It seems to be involved in an RecBC-independent recombinational process of DNA repair. It may act with RecF and RecO. The polypeptide is Recombination protein RecR (Phytoplasma mali (strain AT)).